The chain runs to 146 residues: Cytidine deaminase (146 aa).

The CMP/dCMP-type deaminase domain maps to 13-140 (ECVQQLLVCS…ELLPSSFGPE (128 aa)). Residue 54-60 (NIENACY) participates in substrate binding. Cysteine 65 is a Zn(2+) binding site. Glutamate 67 serves as the catalytic Proton donor. Zn(2+) is bound by residues cysteine 99 and cysteine 102.

Belongs to the cytidine and deoxycytidylate deaminase family. In terms of assembly, homotetramer. Requires Zn(2+) as cofactor. Highly expressed in granulocytes while expression is very low in fibroblasts, chondrocytes, monocytes, and T- as well as B-cell lines.

The catalysed reaction is cytidine + H2O + H(+) = uridine + NH4(+). It catalyses the reaction 2'-deoxycytidine + H2O + H(+) = 2'-deoxyuridine + NH4(+). Its function is as follows. This enzyme scavenges exogenous and endogenous cytidine and 2'-deoxycytidine for UMP synthesis. This chain is Cytidine deaminase, found in Homo sapiens (Human).